We begin with the raw amino-acid sequence, 269 residues long: tRNA (guanine-N(1)-)-methyltransferase (269 aa).

Residues Gly-115 and 139 to 144 each bind S-adenosyl-L-methionine; that span reads LGDYVL.

The protein belongs to the RNA methyltransferase TrmD family. Homodimer.

It is found in the cytoplasm. It carries out the reaction guanosine(37) in tRNA + S-adenosyl-L-methionine = N(1)-methylguanosine(37) in tRNA + S-adenosyl-L-homocysteine + H(+). Its function is as follows. Specifically methylates guanosine-37 in various tRNAs. This Pseudarthrobacter chlorophenolicus (strain ATCC 700700 / DSM 12829 / CIP 107037 / JCM 12360 / KCTC 9906 / NCIMB 13794 / A6) (Arthrobacter chlorophenolicus) protein is tRNA (guanine-N(1)-)-methyltransferase.